A 90-amino-acid polypeptide reads, in one-letter code: Carboxysome shell vertex protein CsoS4A (90 aa).

The 78-residue stretch at 1–78 folds into the BMV domain; it reads MKIYKVDKTL…SDLTIVGIID (78 aa).

The protein belongs to the CcmL/EutN family. CsoS4 subfamily. Homopentamer.

Its subcellular location is the carboxysome. In terms of biological role, probably forms vertices in the carboxysome, a polyhedral inclusion where RuBisCO (ribulose bisphosphate carboxylase, cbbL-cbbS) is sequestered. Has been modeled to induce curvature upon insertion into an otherwise flat hexagonal layer of major carboxysome subunits. This is Carboxysome shell vertex protein CsoS4A from Hydrogenovibrio crunogenus (strain DSM 25203 / XCL-2) (Thiomicrospira crunogena).